The chain runs to 301 residues: Phosphoribosylaminoimidazole-succinocarboxamide synthase (301 aa).

This sequence belongs to the SAICAR synthetase family.

The catalysed reaction is 5-amino-1-(5-phospho-D-ribosyl)imidazole-4-carboxylate + L-aspartate + ATP = (2S)-2-[5-amino-1-(5-phospho-beta-D-ribosyl)imidazole-4-carboxamido]succinate + ADP + phosphate + 2 H(+). It functions in the pathway purine metabolism; IMP biosynthesis via de novo pathway; 5-amino-1-(5-phospho-D-ribosyl)imidazole-4-carboxamide from 5-amino-1-(5-phospho-D-ribosyl)imidazole-4-carboxylate: step 1/2. The chain is Phosphoribosylaminoimidazole-succinocarboxamide synthase from Mycolicibacterium vanbaalenii (strain DSM 7251 / JCM 13017 / BCRC 16820 / KCTC 9966 / NRRL B-24157 / PYR-1) (Mycobacterium vanbaalenii).